Here is a 1443-residue protein sequence, read N- to C-terminus: ARF guanine-nucleotide exchange factor GNL1 (1443 aa).

Residues 554 to 743 enclose the SEC7 domain; that stretch reads FVRKVKHIKK…SEIYHSIRHS (190 aa). Glutamate 658 is a catalytic residue. 2 disordered regions span residues 917-949 and 1424-1443; these read DDPE…AMPR and DQFQ…GNEV. Polar residues predominate over residues 939 to 949; that stretch reads VSQSQPSAMPR. Basic and acidic residues predominate over residues 1425 to 1435; that stretch reads QFQRRNAKPED.

In terms of assembly, homodimer.

The protein localises to the cytoplasm. It localises to the cytosol. Its subcellular location is the golgi apparatus membrane. Activates the ARF proteins by exchanging bound GDP for free GTP. Plays a role in vesicular protein sorting. Acts as the major regulator of retrograde Golgi to endoplasmic reticulum trafficking but is also involved in the endocytosis process. Could function redundantly with GNOM. Regulates vesicle trafficking required for the coordinated polar localization of auxin efflux carriers which in turn determines the direction of auxin flow. Mediates the endocytosis of PIN2 from plasma membrane to endosomal compartments. Required for maintenance of endoplasmic reticulum morphology. The polypeptide is ARF guanine-nucleotide exchange factor GNL1 (GNL1) (Arabidopsis thaliana (Mouse-ear cress)).